A 501-amino-acid chain; its full sequence is ATP synthase subunit alpha (501 aa).

ATP is bound at residue 169–176; the sequence is GDRQTGKT.

Belongs to the ATPase alpha/beta chains family. As to quaternary structure, F-type ATPases have 2 components, CF(1) - the catalytic core - and CF(0) - the membrane proton channel. CF(1) has five subunits: alpha(3), beta(3), gamma(1), delta(1), epsilon(1). CF(0) has three main subunits: a(1), b(2) and c(9-12). The alpha and beta chains form an alternating ring which encloses part of the gamma chain. CF(1) is attached to CF(0) by a central stalk formed by the gamma and epsilon chains, while a peripheral stalk is formed by the delta and b chains.

The protein resides in the cell membrane. It carries out the reaction ATP + H2O + 4 H(+)(in) = ADP + phosphate + 5 H(+)(out). Produces ATP from ADP in the presence of a proton gradient across the membrane. The alpha chain is a regulatory subunit. In Streptococcus pneumoniae serotype 4 (strain ATCC BAA-334 / TIGR4), this protein is ATP synthase subunit alpha.